The following is a 123-amino-acid chain: MKCKVYTVVVPNVQSATLLPIIREKVKPDSIVYTDTFRSYDVLDVSEFSHFRINHSTHFAENHNYINGIGNFWNHAKRHLQKFNGIPKEHFELYLKECEWRFNNSEIKSQISILKQLVKGSLV.

To insertion element IS1016 transposase.

This is an uncharacterized protein from Haemophilus influenzae (strain ATCC 51907 / DSM 11121 / KW20 / Rd).